Here is a 294-residue protein sequence, read N- to C-terminus: Survival motor neuron protein (294 aa).

Over residues 1-12 the composition is skewed to gly residues; sequence MAMSSGGSGGGV. The disordered stretch occupies residues 1 to 32; sequence MAMSSGGSGGGVPEQEDSVLFRRGTGQSDDSD. Alanine 2 bears the N-acetylalanine mark. Phosphoserine; by PKA occurs at positions 4, 5, and 8. The tract at residues 13–44 is P1 (binding site for GEMIN2); it reads PEQEDSVLFRRGTGQSDDSDIWDDTALIKAYD. Threonine 25 bears the Phosphothreonine mark. Phosphoserine is present on residues serine 28 and serine 31. Residue lysine 51 forms a Glycyl lysine isopeptide (Lys-Gly) (interchain with G-Cter in SUMO2) linkage. The tract at residues 58–88 is disordered; that stretch reads DICETSGKPKTTPKRKPAKKNKSQKKNTAAP. A compositionally biased stretch (basic residues) spans 68 to 82; that stretch reads TTPKRKPAKKNKSQK. Threonine 69 is subject to Phosphothreonine. Threonine 85 is modified (phosphothreonine; by PKA). Residues 91 to 151 enclose the Tudor domain; that stretch reads QWKVGDKCSA…LSPISEVANN (61 aa). A required for interaction with RPP20/POP7 region spans residues 97 to 209; the sequence is KCSAIWSEDG…MPGPRLGPGK (113 aa). The span at 156–166 shows a compositional bias: low complexity; the sequence is AQENENESQVS. Residues 156–222 form a disordered region; it reads AQENENESQV…KFNGPPPPPP (67 aa). Serine 187 is modified (phosphoserine; by PKA). Over residues 194-204 the composition is skewed to pro residues; that stretch reads LPPPPPMPGPR. Residue lysine 209 forms a Glycyl lysine isopeptide (Lys-Gly) (interchain with G-Cter in SUMO2) linkage. Positions 240-267 are P2 (binding site for SM B); it reads PPIIPPPPPICPDSLDDADALGSMLISW. The tract at residues 279 to 294 is required for interaction with SYNCRIP; the sequence is GFRQNQKEGRCSHSLN.

This sequence belongs to the SMN family. Homooligomer; may form higher order homooligomers in the dimer to octamer range. Part of the core SMN complex that contains SMN1, GEMIN2/SIP1, DDX20/GEMIN3, GEMIN4, GEMIN5, GEMIN6, GEMIN7, GEMIN8 and STRAP/UNRIP. Part of the SMN-Sm complex that contains SMN1, GEMIN2/SIP1, DDX20/GEMIN3, GEMIN4, GEMIN5, GEMIN6, GEMIN7, GEMIN8, STRAP/UNRIP and the Sm proteins SNRPB, SNRPD1, SNRPD2, SNRPD3, SNRPE, SNRPF and SNRPG. Component of an import snRNP complex composed of KPNB1, RNUT1, SMN1 and ZNF259. Interacts with DDX20, FBL, NOLA1, RNUT1, SYNCRIP and with several spliceosomal snRNP core Sm proteins, including SNRPB, SNRPD1, SNRPD2, SNRPD3, SNRPE and ILF3. Interacts with GEMIN2; the interaction is direct. Interacts with GEMIN3; the interaction is direct. Interacts with GEMIN8; the interaction is direct. Interacts with SNRPB; the interaction is direct. Interacts (via Tudor domain) with SNRPD1 (via C-terminus); the interaction is direct. Interacts with SNRPD2; the interaction is direct. Interacts (via Tudor domain) with SNRPD3 (via C-terminus); the interaction is direct. Interacts with SNRPE; the interaction is direct. Interacts with OSTF1, LSM10, LSM11 and RPP20/POP7. Interacts (via C-terminal region) with ZPR1 (via C-terminal region). Interacts (via Tudor domain) with COIL. Interacts with SETX; recruits SETX to POLR2A. Interacts with POLR2A (via the C-terminal domain (CTD)). Interacts with PRMT5. Interacts with XRN2. Interacts (via C-terminus) with FMR1 (via C-terminus); the interaction is direct and occurs in a RNA-independent manner. Interacts (via Tudor domain) with SF3B2 ('Arg-508'-methylated form). Interacts with WRAP53/TCAB1. Interacts (via Tudor domain) with ELAVL4 in an RNA-independent manner; the interaction is required for localization of ELAVL4 to RNA granules. Interacts with FRG1.

Its subcellular location is the nucleus. The protein localises to the gem. The protein resides in the cajal body. It localises to the cytoplasm. It is found in the cytoplasmic granule. Its subcellular location is the perikaryon. The protein localises to the cell projection. The protein resides in the neuron projection. It localises to the axon. It is found in the myofibril. Its subcellular location is the sarcomere. The protein localises to the z line. Functionally, the SMN complex catalyzes the assembly of small nuclear ribonucleoproteins (snRNPs), the building blocks of the spliceosome, and thereby plays an important role in the splicing of cellular pre-mRNAs. Most spliceosomal snRNPs contain a common set of Sm proteins SNRPB, SNRPD1, SNRPD2, SNRPD3, SNRPE, SNRPF and SNRPG that assemble in a heptameric protein ring on the Sm site of the small nuclear RNA to form the core snRNP (Sm core). In the cytosol, the Sm proteins SNRPD1, SNRPD2, SNRPE, SNRPF and SNRPG are trapped in an inactive 6S pICln-Sm complex by the chaperone CLNS1A that controls the assembly of the core snRNP. To assemble core snRNPs, the SMN complex accepts the trapped 5Sm proteins from CLNS1A forming an intermediate. Binding of snRNA inside 5Sm ultimately triggers eviction of the SMN complex, thereby allowing binding of SNRPD3 and SNRPB to complete assembly of the core snRNP. Within the SMN complex, SMN1 acts as a structural backbone and together with GEMIN2 it gathers the Sm complex subunits. Ensures the correct splicing of U12 intron-containing genes that may be important for normal motor and proprioceptive neurons development. Also required for resolving RNA-DNA hybrids created by RNA polymerase II, that form R-loop in transcription terminal regions, an important step in proper transcription termination. May also play a role in the metabolism of small nucleolar ribonucleoprotein (snoRNPs). The chain is Survival motor neuron protein (SMN1) from Macaca fascicularis (Crab-eating macaque).